The chain runs to 153 residues: Ribonuclease H (153 aa).

The RNase H type-1 domain occupies 1–141 (MKLVEIFTDG…CDELAKAGAN (141 aa)). Mg(2+) is bound by residues Asp9, Glu47, Asp69, and Asp133.

The protein belongs to the RNase H family. Monomer. Requires Mg(2+) as cofactor.

The protein localises to the cytoplasm. The catalysed reaction is Endonucleolytic cleavage to 5'-phosphomonoester.. Endonuclease that specifically degrades the RNA of RNA-DNA hybrids. The sequence is that of Ribonuclease H from Actinobacillus pleuropneumoniae serotype 5b (strain L20).